We begin with the raw amino-acid sequence, 217 residues long: Ribosomal RNA small subunit methyltransferase G (217 aa).

S-adenosyl-L-methionine contacts are provided by residues glycine 79, phenylalanine 84, 130-131 (AE), and arginine 148.

It belongs to the methyltransferase superfamily. RNA methyltransferase RsmG family.

The protein resides in the cytoplasm. The enzyme catalyses guanosine(527) in 16S rRNA + S-adenosyl-L-methionine = N(7)-methylguanosine(527) in 16S rRNA + S-adenosyl-L-homocysteine. In terms of biological role, specifically methylates the N7 position of guanine in position 527 of 16S rRNA. The polypeptide is Ribosomal RNA small subunit methyltransferase G (Myxococcus xanthus (strain DK1622)).